The chain runs to 571 residues: Putative F-box protein At5g39460 (571 aa).

The 47-residue stretch at 9-55 (ACLLLTLPEDVFAVISRFLSPSDICNLILCGKSLCALVDSEKTWLVQ) folds into the F-box domain.

The protein is Putative F-box protein At5g39460 of Arabidopsis thaliana (Mouse-ear cress).